The primary structure comprises 210 residues: Large ribosomal subunit protein uL3 (210 aa).

It belongs to the universal ribosomal protein uL3 family. As to quaternary structure, part of the 50S ribosomal subunit. Forms a cluster with proteins L14 and L19.

In terms of biological role, one of the primary rRNA binding proteins, it binds directly near the 3'-end of the 23S rRNA, where it nucleates assembly of the 50S subunit. This chain is Large ribosomal subunit protein uL3, found in Lawsonia intracellularis (strain PHE/MN1-00).